The sequence spans 48 residues: ASCKCDDDGPDVRSATFTGTVDFAYCNAGWEKCLAVYTPVASCCRKKK.

Cystine bridges form between C3–C43, C5–C33, and C26–C44.

It belongs to the sea anemone sodium channel inhibitory toxin family. Type II subfamily.

The protein localises to the secreted. The protein resides in the nematocyst. In terms of biological role, binds to site 3 of voltage-gated sodium channels and inhibits the inactivation process. In Radianthus crispa (Leathery sea anemone), this protein is Delta-stichotoxin-Hcr1e.